The chain runs to 494 residues: Cobyrinate a,c-diamide synthase (494 aa).

A GATase cobBQ-type domain is found at 270 to 475; the sequence is KIGVALDEAF…AHLHGVAYRE (206 aa). Cys352 functions as the Nucleophile in the catalytic mechanism.

It belongs to the CobB/CbiA family. Requires Mg(2+) as cofactor.

The catalysed reaction is cob(II)yrinate + 2 L-glutamine + 2 ATP + 2 H2O = cob(II)yrinate a,c diamide + 2 L-glutamate + 2 ADP + 2 phosphate + 2 H(+). The enzyme catalyses Ni-sirohydrochlorin + 2 L-glutamine + 2 ATP + 2 H2O = Ni-sirohydrochlorin a,c-diamide + 2 L-glutamate + 2 ADP + 2 phosphate + 2 H(+). It functions in the pathway cofactor biosynthesis; adenosylcobalamin biosynthesis; cob(II)yrinate a,c-diamide from sirohydrochlorin (anaerobic route): step 10/10. Functionally, catalyzes the ATP-dependent amidation of the two carboxylate groups at positions a and c of cobyrinate, using either L-glutamine or ammonia as the nitrogen source (Potential). Involved in the biosynthesis of the unique nickel-containing tetrapyrrole coenzyme F430, the prosthetic group of methyl-coenzyme M reductase (MCR), which plays a key role in methanogenesis and anaerobic methane oxidation. Catalyzes the ATP-dependent amidation of the two carboxylate groups at positions a and c of Ni-sirohydrochlorin, using L-glutamine or ammonia as the nitrogen source. Also able to use sirohydrochlorin as substrate, but only produces a monoamide species in a much slower reaction. Unable to use other metallosirohydrochlorins such as sirohaem and Co-sirohydrochlorin. The sequence is that of Cobyrinate a,c-diamide synthase from Methanosarcina barkeri (strain Fusaro / DSM 804).